A 176-amino-acid chain; its full sequence is Ribosome maturation factor RimM (176 aa).

In terms of domain architecture, PRC barrel spans 102 to 175 (KNDYYWNDII…TDKKFILVQW (74 aa)).

The protein belongs to the RimM family. Binds ribosomal protein uS19.

It localises to the cytoplasm. Its function is as follows. An accessory protein needed during the final step in the assembly of 30S ribosomal subunit, possibly for assembly of the head region. Essential for efficient processing of 16S rRNA. May be needed both before and after RbfA during the maturation of 16S rRNA. It has affinity for free ribosomal 30S subunits but not for 70S ribosomes. This Buchnera aphidicola subsp. Acyrthosiphon pisum (strain APS) (Acyrthosiphon pisum symbiotic bacterium) protein is Ribosome maturation factor RimM.